A 173-amino-acid polypeptide reads, in one-letter code: ATP synthase subunit b (173 aa).

A helical membrane pass occupies residues Ile19–Pro39.

It belongs to the ATPase B chain family. In terms of assembly, F-type ATPases have 2 components, F(1) - the catalytic core - and F(0) - the membrane proton channel. F(1) has five subunits: alpha(3), beta(3), gamma(1), delta(1), epsilon(1). F(0) has three main subunits: a(1), b(2) and c(10-14). The alpha and beta chains form an alternating ring which encloses part of the gamma chain. F(1) is attached to F(0) by a central stalk formed by the gamma and epsilon chains, while a peripheral stalk is formed by the delta and b chains.

The protein localises to the cell membrane. Its function is as follows. F(1)F(0) ATP synthase produces ATP from ADP in the presence of a proton or sodium gradient. F-type ATPases consist of two structural domains, F(1) containing the extramembraneous catalytic core and F(0) containing the membrane proton channel, linked together by a central stalk and a peripheral stalk. During catalysis, ATP synthesis in the catalytic domain of F(1) is coupled via a rotary mechanism of the central stalk subunits to proton translocation. In terms of biological role, component of the F(0) channel, it forms part of the peripheral stalk, linking F(1) to F(0). The polypeptide is ATP synthase subunit b (Bifidobacterium longum (strain NCC 2705)).